We begin with the raw amino-acid sequence, 227 residues long: MGGKQSTAARSRGPFPGVSTDDSAVPPPGGAPHFGHYRTGGGAMGLRSRSVSSVAGMGMDPSTAGGVPFGLYTPASRGTGDSERAPGGGGSASDSTYAHGNGYQETGGGHHRDGMLYLGSRASLADALPLHIAPRWFSSHSGFKCPICSKSVASDEMEMHFIMCLSKPRLSYNDDVLTKDAGECVICLEELLQGDTIARLPCLCIYHKSCIDSWFEVNRSCPEHPAD.

The segment at 1–42 (MGGKQSTAARSRGPFPGVSTDDSAVPPPGGAPHFGHYRTGGG) is disordered. Gly2 carries the N-myristoyl glycine lipid modification. Positions 2 to 10 (GGKQSTAAR) are required for endosomal and lysosomal localization and myristoylation. 3 positions are modified to phosphoserine: Ser50, Ser52, and Ser53. Residues 68 to 105 (PFGLYTPASRGTGDSERAPGGGGSASDSTYAHGNGYQE) form a disordered region. At Tyr103 the chain carries Phosphotyrosine; by SRC. A Phosphoserine modification is found at Ser123. The RING-type; atypical zinc-finger motif lies at 184–225 (CVICLEELLQGDTIARLPCLCIYHKSCIDSWFEVNRSCPEHP).

As to quaternary structure, interacts with AKT1, GLUL and TUBB2A. Interacts with ZNRF2. Interacts (via its RING domain) with UBE2N. Interacts (when phosphorylated) with YWHAE. N-myristoylation targets ZNRF1 to intracellular membranes. In terms of processing, phosphorylated by SRC at Tyr-103; leading to 'Lys-63'-linked ubiquitination of TLR3, lysosomal trafficking and degradation. As to expression, expressed primarily in the nervous system, with expression higher in developing brain relative to adult. Expressed at low levels in testis and thymus.

The protein resides in the endosome. The protein localises to the lysosome. Its subcellular location is the membrane. It is found in the cytoplasmic vesicle. It localises to the secretory vesicle. The protein resides in the synaptic vesicle membrane. It carries out the reaction S-ubiquitinyl-[E2 ubiquitin-conjugating enzyme]-L-cysteine + [acceptor protein]-L-lysine = [E2 ubiquitin-conjugating enzyme]-L-cysteine + N(6)-ubiquitinyl-[acceptor protein]-L-lysine.. It functions in the pathway protein modification; protein ubiquitination. Its function is as follows. E3 ubiquitin-protein ligase that plays a role in different processes including cell differentiation, receptor recycling or regulation of inflammation. Mediates the ubiquitination of AKT1 and GLUL, thereby playing a role in neuron cells differentiation. Plays a role in the establishment and maintenance of neuronal transmission and plasticity. Regulates Schwann cells differentiation by mediating ubiquitination of GLUL. Promotes neurodegeneration by mediating 'Lys-48'-linked polyubiquitination and subsequent degradation of AKT1 in axons: degradation of AKT1 prevents AKT1-mediated phosphorylation of GSK3B, leading to GSK3B activation and phosphorylation of DPYSL2/CRMP2 followed by destabilization of microtubule assembly in axons. Ubiquitinates the Na(+)/K(+) ATPase alpha-1 subunit/ATP1A1 and thereby influences its endocytosis and/or degradation. Controls ligand-induced EGFR signaling via mediating receptor ubiquitination and recruitment of the ESCRT machinery. Acts as a negative feedback mechanism controlling TLR3 trafficking by mediating TLR3 'Lys-63'-linked polyubiquitination to reduce type I IFN production. Modulates inflammation by promoting caveolin-1/CAV1 ubiquitination and degradation to regulate TLR4-activated immune response. The polypeptide is E3 ubiquitin-protein ligase ZNRF1 (ZNRF1) (Homo sapiens (Human)).